The chain runs to 169 residues: Cell division inhibitor SulA (169 aa).

The tract at residues 1 to 22 (MHTSIYANRSTSFSPSAGNDTQ) is disordered. The interval 106 to 112 (ALRTGNY) is ftsZ binding. Residues 162–169 (KIHSNLYH) are lon protease binding.

Belongs to the SulA family. Interacts with FtsZ. In terms of processing, is rapidly cleaved and degraded by the Lon protease once DNA damage is repaired.

Its function is as follows. Component of the SOS system and an inhibitor of cell division. Accumulation of SulA causes rapid cessation of cell division and the appearance of long, non-septate filaments. In the presence of GTP, binds a polymerization-competent form of FtsZ in a 1:1 ratio, thus inhibiting FtsZ polymerization and therefore preventing it from participating in the assembly of the Z ring. This mechanism prevents the premature segregation of damaged DNA to daughter cells during cell division. This Enterobacter sp. (strain 638) protein is Cell division inhibitor SulA.